The chain runs to 289 residues: Proteasome subunit beta (289 aa).

Positions 1–55 are cleaved as a propeptide — removed in mature form; by autocatalysis; the sequence is MTWPLPDRLSINSAISGSAVDLSSFAEFLRRQAPELLPASIKHGGGAVGDQLPHA. The active-site Nucleophile is the T56.

This sequence belongs to the peptidase T1B family. As to quaternary structure, the 20S proteasome core is composed of 14 alpha and 14 beta subunits that assemble into four stacked heptameric rings, resulting in a barrel-shaped structure. The two inner rings, each composed of seven catalytic beta subunits, are sandwiched by two outer rings, each composed of seven alpha subunits. The catalytic chamber with the active sites is on the inside of the barrel. Has a gated structure, the ends of the cylinder being occluded by the N-termini of the alpha-subunits. Is capped by the proteasome-associated ATPase, ARC.

It is found in the cytoplasm. It carries out the reaction Cleavage of peptide bonds with very broad specificity.. It functions in the pathway protein degradation; proteasomal Pup-dependent pathway. With respect to regulation, the formation of the proteasomal ATPase ARC-20S proteasome complex, likely via the docking of the C-termini of ARC into the intersubunit pockets in the alpha-rings, may trigger opening of the gate for substrate entry. Interconversion between the open-gate and close-gate conformations leads to a dynamic regulation of the 20S proteasome proteolysis activity. Its function is as follows. Component of the proteasome core, a large protease complex with broad specificity involved in protein degradation. The polypeptide is Proteasome subunit beta (Mycobacterium marinum (strain ATCC BAA-535 / M)).